Here is an 847-residue protein sequence, read N- to C-terminus: MDKRLLVKRTLGCVCAATLMGAILATHHDSLISVKAEEKTVQTGKTDQQIGAKLVQEIREGKRGPLYAGYFRTWHDRASTGADGKQQHPENTMAEVPKEVDILFVFHDHTASDSPFWSELKDSYVHKLHQQGTALVQTIGVNELNGRTGLSKDYPDIPEGNKALAAAIVKTFVTDRGVDGLDIDIEHEFTNKRTPEEDARALNVFKEIAQLIGKNGSDKSKLLIMDTTLSVENNPIFKGIAEDLDYLLRQYYGSQGGEAEVDTINSDWNQYQNYIDASQFMIGFSFFEESAPKGNLWFDVNEYDPKNPERGKDIEGTRAKKYAEWQPSTGGLKAGIFSYAIDRDGVAHVGKEYSQRTYQELEAGLKKHPVVDNISHTDYTVSRKLKALMAEDKRYDVIDQKDIPDAALREQVIQQVGQYKGDLERYNKTLVLTVDKIHSLKGLEKLSHLQKLELCQLSNVKEVTPDILPESMKKDAELVMTGMTGLEKLNLRGLNRQTLDGIDVNGLTHLTSFDISHNSLDLSEKSADRKLLMTLMEQVSNHQKITVKNTAFENQKPKGYYPQTYDTKEGHYDVDNAEHDILTDFVFGTVTKRDTFIGDEEAFAMYKEGAIDGRQYVAKDYTYEAFRKDYQGYKVHLTASNLGESDTSKVTATTDETYLVDVFDGEKIVPHMTLHVGNGATIMENLAKGAKVIGTSGDISLAEKVVDGVVADSFWTWDTKNWIAFDLNSQVIAKEWRLFNGETDPRFKDKELNIQKGRLQILKDKTIHLENMSKDERDSYLADEQNWITVSEITSNQKIYNGSITDITSRYWRFCVDEGVSSKSPQYTELQILGQRLSSDIASTVQD.

The first 36 residues, 1–36, serve as a signal peptide directing secretion; sequence MDKRLLVKRTLGCVCAATLMGAILATHHDSLISVKA. The GH18 domain occupies 65–377; it reads PLYAGYFRTW…HPVVDNISHT (313 aa). A glycoprotein is bound at residue histidine 107. Glutamate 186 serves as the catalytic Proton donor. The a glycoprotein site is built by glutamate 188, glutamine 250, tyrosine 252, glutamate 288, glutamate 289, asparagine 295, and tyrosine 339. 4 LRR repeats span residues 423 to 446, 447 to 470, 483 to 506, and 507 to 530; these read LERYNKTLVLTVDKIHSLKGLEKL, SHLQKLELCQLSNVKEVTPDILPE, MTGLEKLNLRGLNRQTLDGIDVNG, and LTHLTSFDISHNSLDLSEKSADRK. The interval 683 to 836 is carbohydrate-binding module (CBM); sequence MENLAKGAKV…YTELQILGQR (154 aa). The Ca(2+) site is built by lysine 704, aspartate 707, and glutamate 829.

Belongs to the glycosyl hydrolase 18 family.

It is found in the secreted. The protein localises to the host extracellular space. The enzyme catalyses an N(4)-(oligosaccharide-(1-&gt;3)-[oligosaccharide-(1-&gt;6)]-beta-D-Man-(1-&gt;4)-beta-D-GlcNAc-(1-&gt;4)-alpha-D-GlcNAc)-L-asparaginyl-[protein] + H2O = an oligosaccharide-(1-&gt;3)-[oligosaccharide-(1-&gt;6)]-beta-D-Man-(1-&gt;4)-D-GlcNAc + N(4)-(N-acetyl-beta-D-glucosaminyl)-L-asparaginyl-[protein]. In terms of biological role, endoglucosidase that acts as a host immune evasion factor by mediating hydrolysis of the N-linked glycan from the Fc region of host immunoglobulin-gamma (IgG) during infection. Specifically catalyzes the hydrolysis of the beta-1,4 linkage between the first two N-acetylglucosamine residues of the complex-type N-linked glycan located on 'Asn-297' of the Fc region of IgG antibodies (IGHG1, IGHG2, IGHG3 or IGHG4), thereby preventing interaction between IgGs and Fc receptors and ability to activate the complement pathway. Shows a specificity for biantennary complex type N-glycans; does neither cleave larger complex type glycans nor oligomannose and nor hybrid-type glycans. Specifically acts on IgGs; does not act on immunoglobulin alpha, beta, delta or mu. The polypeptide is Endo-beta-N-acetylglucosaminidase EndoSd (Streptococcus dysgalactiae).